The following is a 397-amino-acid chain: Argininosuccinate synthase (397 aa).

ATP is bound at residue 9 to 17 (AYSGGLDTS). An L-citrulline-binding site is contributed by Tyr87. Gly117 lines the ATP pocket. Residues Thr119, Asn123, and Asp124 each contribute to the L-aspartate site. An L-citrulline-binding site is contributed by Asn123. Positions 127, 175, 184, 257, and 269 each coordinate L-citrulline.

Belongs to the argininosuccinate synthase family. Type 1 subfamily. As to quaternary structure, homotetramer.

The protein localises to the cytoplasm. It carries out the reaction L-citrulline + L-aspartate + ATP = 2-(N(omega)-L-arginino)succinate + AMP + diphosphate + H(+). It participates in amino-acid biosynthesis; L-arginine biosynthesis; L-arginine from L-ornithine and carbamoyl phosphate: step 2/3. This chain is Argininosuccinate synthase, found in Dictyoglomus thermophilum (strain ATCC 35947 / DSM 3960 / H-6-12).